We begin with the raw amino-acid sequence, 538 residues long: Lipid scramblase CLPTM1L (538 aa).

At 1–10 (MWSGRSSFTS) the chain is on the cytoplasmic side. A helical membrane pass occupies residues 11 to 31 (LVVGVFVVYVVHTCWVMYGIV). Over 32 to 284 (YTRPCSGDAN…VKGIFVDTNL (253 aa)) the chain is Extracellular. N-linked (GlcNAc...) asparagine glycosylation is found at N91 and N101. A helical membrane pass occupies residues 285 to 305 (YFLALTFFVAAFHLLFDFLAF). The Cytoplasmic portion of the chain corresponds to 306–324 (KNDISFWKKKKSMIGMSTK). A helical transmembrane segment spans residues 325-342 (AVLWRCFSTVVIFLFLLD). Over 343-346 (EQTS) the chain is Extracellular. A helical transmembrane segment spans residues 347-364 (LLVLVPAGVGAAIELWKV). Residues 365-402 (KKALKMTILWRGLMPEFELGTYSESERKTEEYDTQAMK) lie on the Cytoplasmic side of the membrane. Residues 403 to 423 (YLSYLLYPLCVGGAVYSLLNI) form a helical membrane-spanning segment. Topologically, residues 424-428 (KYKSW) are extracellular. The helical transmembrane segment at 429-449 (YSWLINSFVNGVYAFGFLFML) threads the bilayer. The Cytoplasmic portion of the chain corresponds to 450 to 538 (PQLFVNYKLK…EKAARAPHTD (89 aa)).

It belongs to the CLPTM1 family.

Its subcellular location is the endoplasmic reticulum membrane. It carries out the reaction a 6-(alpha-D-glucosaminyl)-1-(1,2-diacyl-sn-glycero-3-phospho)-1D-myo-inositol(in) = a 6-(alpha-D-glucosaminyl)-1-(1,2-diacyl-sn-glycero-3-phospho)-1D-myo-inositol(out). The enzyme catalyses 6-(alpha-D-glucosaminyl)-(1-octadecanoyl,2-(9Z)-octadecenoyl-sn-glycero-3-phospho)-1D-myo-inositol(in) = 6-(alpha-D-glucosaminyl)-(1-octadecanoyl,2-(9Z)-octadecenoyl-sn-glycero-3-phospho)-1D-myo-inositol(out). It catalyses the reaction a 1,2-diacyl-sn-glycero-3-phospho-(1D-myo-inositol)(in) = a 1,2-diacyl-sn-glycero-3-phospho-(1D-myo-inositol)(out). The catalysed reaction is a 1,2-diacyl-sn-glycero-3-phosphocholine(in) = a 1,2-diacyl-sn-glycero-3-phosphocholine(out). It carries out the reaction a 1,2-diacyl-sn-glycero-3-phosphoethanolamine(in) = a 1,2-diacyl-sn-glycero-3-phosphoethanolamine(out). In terms of biological role, scramblase that mediates the translocation of glucosaminylphosphatidylinositol (alpha-D-GlcN-(1-6)-(1,2-diacyl-sn-glycero-3-phospho)-1D-myo-inositol, GlcN-PI) across the endoplasmic reticulum (ER) membrane, from the cytosolic leaflet to the luminal leaflet of the ER membrane, where it participates in the biosynthesis of glycosylphosphatidylinositol (GPI). GPI is a lipid glycoconjugate involved in post-translational modification of proteins. Can also translocate 1,2-diacyl-sn-glycero-3-phospho-(1D-myo-inositol) (phosphatidylinositol or PI), as well as several other phospholipids (1,2-diacyl-sn-glycero-3-phosphocholine, 1,2-diacyl-sn-glycero-3-phosphoethanolamine), and N-acetylglucosaminylphosphatidylinositol (GlcNAc-PI) in vitro. This Pongo abelii (Sumatran orangutan) protein is Lipid scramblase CLPTM1L (CLPTM1L).